The following is a 744-amino-acid chain: Translation initiation factor IF-2, chloroplastic (744 aa).

A disordered region spans residues 113 to 146 (NSEGSFKSGKQKKKEKGKHKQNVNKDIHHTKNNR). Residues 121–134 (GKQKKKEKGKHKQN) are compositionally biased toward basic residues. In terms of domain architecture, tr-type G spans 244–417 (NRAPIVTILG…CSLAEFINLK (174 aa)). A G1 region spans residues 253-260 (GHVDHGKT). Residue 253–260 (GHVDHGKT) participates in GTP binding. The interval 278-282 (GITQS) is G2. The interval 303 to 306 (DTPG) is G3. GTP contacts are provided by residues 303-307 (DTPGH) and 357-360 (NKID). The segment at 357–360 (NKID) is G4. The tract at residues 393–395 (SAL) is G5.

This sequence belongs to the TRAFAC class translation factor GTPase superfamily. Classic translation factor GTPase family. IF-2 subfamily.

It is found in the plastid. The protein localises to the chloroplast. Its function is as follows. One of the essential components for the initiation of protein synthesis. Protects formylmethionyl-tRNA from spontaneous hydrolysis and promotes its binding to the 30S ribosomal subunits. Also involved in the hydrolysis of GTP during the formation of the 70S ribosomal complex. The sequence is that of Translation initiation factor IF-2, chloroplastic (infB) from Gracilaria tenuistipitata var. liui (Red alga).